The chain runs to 77 residues: U8-lycotoxin-Ls1w (77 aa).

The signal sequence occupies residues 1–20; it reads MKLIIFTGLVLFAIVSLIEA. Residues 21–26 constitute a propeptide that is removed on maturation; that stretch reads QAENEK.

Belongs to the neurotoxin 19 (CSTX) family. 08 (U8-Lctx) subfamily. Contains 4 disulfide bonds. In terms of tissue distribution, expressed by the venom gland.

Its subcellular location is the secreted. The sequence is that of U8-lycotoxin-Ls1w from Lycosa singoriensis (Wolf spider).